A 505-amino-acid polypeptide reads, in one-letter code: Lysine--tRNA ligase (505 aa).

Residues glutamate 415 and glutamate 422 each contribute to the Mg(2+) site.

The protein belongs to the class-II aminoacyl-tRNA synthetase family. Homodimer. Requires Mg(2+) as cofactor.

The protein localises to the cytoplasm. It carries out the reaction tRNA(Lys) + L-lysine + ATP = L-lysyl-tRNA(Lys) + AMP + diphosphate. This chain is Lysine--tRNA ligase, found in Xanthomonas oryzae pv. oryzae (strain MAFF 311018).